The primary structure comprises 879 residues: DNA double-strand break repair Rad50 ATPase (879 aa).

ATP-binding positions include 32–38 and glutamine 139; that span reads NGAGKSS. Coiled-coil stretches lie at residues 184–304 and 342–436; these read IELQ…NKIK and EIKG…NQVK. Positions 394–492 constitute a Zinc-hook domain; the sequence is LQKLNEDLNN…LISELNQIIN (99 aa). Zn(2+)-binding residues include cysteine 440 and cysteine 443. Residues 502-722 are a coiled coil; the sequence is IRNLADYNNL…LITAYDKLKK (221 aa). 786 to 791 is a binding site for ATP; that stretch reads LLSGGE.

This sequence belongs to the SMC family. RAD50 subfamily. In terms of assembly, homodimer. Forms a heterotetramer composed of two Mre11 subunits and two Rad50 subunits. Zn(2+) serves as cofactor.

Part of the Rad50/Mre11 complex, which is involved in the early steps of DNA double-strand break (DSB) repair. The complex may facilitate opening of the processed DNA ends to aid in the recruitment of HerA and NurA. Rad50 controls the balance between DNA end bridging and DNA resection via ATP-dependent structural rearrangements of the Rad50/Mre11 complex. The polypeptide is DNA double-strand break repair Rad50 ATPase (Sulfurisphaera tokodaii (strain DSM 16993 / JCM 10545 / NBRC 100140 / 7) (Sulfolobus tokodaii)).